A 309-amino-acid chain; its full sequence is Homoserine kinase (309 aa).

91 to 101 provides a ligand contact to ATP; that stretch reads PIGSGLGSSAC.

It belongs to the GHMP kinase family. Homoserine kinase subfamily.

The protein resides in the cytoplasm. The enzyme catalyses L-homoserine + ATP = O-phospho-L-homoserine + ADP + H(+). The protein operates within amino-acid biosynthesis; L-threonine biosynthesis; L-threonine from L-aspartate: step 4/5. In terms of biological role, catalyzes the ATP-dependent phosphorylation of L-homoserine to L-homoserine phosphate. The polypeptide is Homoserine kinase (Salmonella dublin (strain CT_02021853)).